The following is a 90-amino-acid chain: DNA/RNA-binding protein Alba (90 aa).

Lys8 carries the post-translational modification N6-acetyllysine.

Belongs to the histone-like Alba family. Acetylated. Acetylation at Lys-8 decreases DNA-binding affinity.

It is found in the cytoplasm. The protein resides in the chromosome. Functionally, binds double-stranded DNA tightly but without sequence specificity. Involved in DNA compaction. The polypeptide is DNA/RNA-binding protein Alba (Nanoarchaeum equitans (strain Kin4-M)).